The sequence spans 264 residues: Large ribosomal subunit protein mL50 (264 aa).

A mitochondrion-targeting transit peptide spans 1 to 75 (MSSLLKLHCI…EEGTNEASSQ (75 aa)).

It belongs to the mitochondrion-specific ribosomal protein mL50 family. Component of the mitochondrial large ribosomal subunit (mt-LSU). Mature yeast 74S mitochondrial ribosomes consist of a small (37S) and a large (54S) subunit. The 37S small subunit contains a 15S ribosomal RNA (15S mt-rRNA) and 34 different proteins. The 54S large subunit contains a 21S rRNA (21S mt-rRNA) and 46 different proteins.

The protein resides in the mitochondrion. Its function is as follows. Component of the mitochondrial ribosome (mitoribosome), a dedicated translation machinery responsible for the synthesis of mitochondrial genome-encoded proteins, including at least some of the essential transmembrane subunits of the mitochondrial respiratory chain. The mitoribosomes are attached to the mitochondrial inner membrane and translation products are cotranslationally integrated into the membrane. The chain is Large ribosomal subunit protein mL50 (MRPL13) from Saccharomyces cerevisiae (strain ATCC 204508 / S288c) (Baker's yeast).